Here is a 354-residue protein sequence, read N- to C-terminus: NADH-quinone oxidoreductase subunit H (354 aa).

Helical transmembrane passes span 12 to 32 (LLGGFWPVVWNLIKIVALIAP), 62 to 82 (PWGLLTPIADAVKLIFKEIIL), 89 to 109 (GLFLLGPVMTIMPALAAWVVV), 124 to 144 (LLFLMAITSMEVYGVIIAGWA), 162 to 182 (VSYEIAMGFALVVVLMVSGTL), 203 to 223 (FLSWNWLPLFPIFIVYFISGL), 239 to 259 (EIVAGHMIEYSGMAFAMFFLA), 263 to 283 (NMILISALAVTMFLGGWLPPI), 291 to 311 (IPGWIWLGLKTFVVVTMFLWV), and 326 to 346 (LGWKIFIPITLIWLVVVGLWI).

The protein belongs to the complex I subunit 1 family. In terms of assembly, NDH-1 is composed of 14 different subunits. Subunits NuoA, H, J, K, L, M, N constitute the membrane sector of the complex.

It is found in the cell inner membrane. It catalyses the reaction a quinone + NADH + 5 H(+)(in) = a quinol + NAD(+) + 4 H(+)(out). Functionally, NDH-1 shuttles electrons from NADH, via FMN and iron-sulfur (Fe-S) centers, to quinones in the respiratory chain. The immediate electron acceptor for the enzyme in this species is believed to be ubiquinone. Couples the redox reaction to proton translocation (for every two electrons transferred, four hydrogen ions are translocated across the cytoplasmic membrane), and thus conserves the redox energy in a proton gradient. This subunit may bind ubiquinone. The polypeptide is NADH-quinone oxidoreductase subunit H (Methylibium petroleiphilum (strain ATCC BAA-1232 / LMG 22953 / PM1)).